The primary structure comprises 394 residues: Flagellin B (394 aa).

This sequence belongs to the bacterial flagellin family.

The protein localises to the secreted. Its subcellular location is the bacterial flagellum. In terms of biological role, flagellin is the subunit protein which polymerizes to form the filaments of bacterial flagella. The protein is Flagellin B (flaB) of Rhizobium meliloti (strain 1021) (Ensifer meliloti).